Here is a 65-residue protein sequence, read N- to C-terminus: Large ribosomal subunit protein bL31 (65 aa).

Residues Cys-16, Cys-18, Cys-36, and Cys-39 each coordinate Zn(2+).

Belongs to the bacterial ribosomal protein bL31 family. Type A subfamily. As to quaternary structure, part of the 50S ribosomal subunit. The cofactor is Zn(2+).

In terms of biological role, binds the 23S rRNA. This Carboxydothermus hydrogenoformans (strain ATCC BAA-161 / DSM 6008 / Z-2901) protein is Large ribosomal subunit protein bL31.